The chain runs to 241 residues: Methylthioribulose-1-phosphate dehydratase (241 aa).

Polar residues predominate over residues 1-17; sequence MAKQVENNNNDHLVQST. The tract at residues 1–21 is disordered; that stretch reads MAKQVENNNNDHLVQSTDPEH. C100 contacts substrate. Zn(2+) contacts are provided by H117 and H119. The Proton donor/acceptor role is filled by E146. Residue H202 coordinates Zn(2+).

This sequence belongs to the aldolase class II family. MtnB subfamily. The cofactor is Zn(2+).

Its subcellular location is the cytoplasm. It carries out the reaction 5-(methylsulfanyl)-D-ribulose 1-phosphate = 5-methylsulfanyl-2,3-dioxopentyl phosphate + H2O. It participates in amino-acid biosynthesis; L-methionine biosynthesis via salvage pathway; L-methionine from S-methyl-5-thio-alpha-D-ribose 1-phosphate: step 2/6. Its function is as follows. Catalyzes the dehydration of methylthioribulose-1-phosphate (MTRu-1-P) into 2,3-diketo-5-methylthiopentyl-1-phosphate (DK-MTP-1-P). This is Methylthioribulose-1-phosphate dehydratase from Aspergillus flavus (strain ATCC 200026 / FGSC A1120 / IAM 13836 / NRRL 3357 / JCM 12722 / SRRC 167).